Consider the following 510-residue polypeptide: NAD(P)H-quinone oxidoreductase subunit 2 A, chloroplastic (510 aa).

13 helical membrane-spanning segments follow: residues 24–44, 57–77, 99–119, 124–144, 149–169, 183–203, 227–247, 295–315, 323–343, 354–374, 395–415, 418–438, and 484–504; these read LLLFDGSLIFPECILIFGLIL, IPWLYFISSTSLVMSITALLF, IFQFLILLCSTLCIPLSVEYI, MAITEFLLFVLTATLGGMFLC, LITIFVAPECFSLCSYLLSGY, YLLMGGASSSILVHGFSWLYG, PGISIALIFITVGIGFKLSPA, WHLLLEILAILSMILGNLIAI, MLAYSSIGQIGYVIIGIIVGD, YMLFYISMNLGTFACIVLFGL, ALSLALCLLSLGGLPPLAGFF, LYLFWCGWQAGLYFLVLIGLL, and MIVCVIASTIPGISMNPIIAI.

The protein belongs to the complex I subunit 2 family. As to quaternary structure, NDH is composed of at least 16 different subunits, 5 of which are encoded in the nucleus.

It localises to the plastid. The protein resides in the chloroplast thylakoid membrane. The enzyme catalyses a plastoquinone + NADH + (n+1) H(+)(in) = a plastoquinol + NAD(+) + n H(+)(out). It carries out the reaction a plastoquinone + NADPH + (n+1) H(+)(in) = a plastoquinol + NADP(+) + n H(+)(out). Functionally, NDH shuttles electrons from NAD(P)H:plastoquinone, via FMN and iron-sulfur (Fe-S) centers, to quinones in the photosynthetic chain and possibly in a chloroplast respiratory chain. The immediate electron acceptor for the enzyme in this species is believed to be plastoquinone. Couples the redox reaction to proton translocation, and thus conserves the redox energy in a proton gradient. The chain is NAD(P)H-quinone oxidoreductase subunit 2 A, chloroplastic from Panax ginseng (Korean ginseng).